We begin with the raw amino-acid sequence, 189 residues long: Elongation factor P (189 aa).

At lysine 34 the chain carries N6-(3,6-diaminohexanoyl)-5-hydroxylysine.

The protein belongs to the elongation factor P family. Post-translationally, may be beta-lysylated on the epsilon-amino group of Lys-34 by the combined action of EpmA and EpmB, and then hydroxylated on the C5 position of the same residue by EpmC (if this protein is present). Lysylation is critical for the stimulatory effect of EF-P on peptide-bond formation. The lysylation moiety may extend toward the peptidyltransferase center and stabilize the terminal 3-CCA end of the tRNA. Hydroxylation of the C5 position on Lys-34 may allow additional potential stabilizing hydrogen-bond interactions with the P-tRNA.

It localises to the cytoplasm. It functions in the pathway protein biosynthesis; polypeptide chain elongation. Its function is as follows. Involved in peptide bond synthesis. Alleviates ribosome stalling that occurs when 3 or more consecutive Pro residues or the sequence PPG is present in a protein, possibly by augmenting the peptidyl transferase activity of the ribosome. Modification of Lys-34 is required for alleviation. The chain is Elongation factor P from Francisella philomiragia subsp. philomiragia (strain ATCC 25017 / CCUG 19701 / FSC 153 / O#319-036).